Reading from the N-terminus, the 228-residue chain is PKHD-type hydroxylase Vapar_1809 (228 aa).

Residues glutamine 78–serine 179 form the Fe2OG dioxygenase domain. The Fe cation site is built by histidine 97, aspartate 99, and histidine 160. Position 170 (arginine 170) interacts with 2-oxoglutarate.

Requires Fe(2+) as cofactor. The cofactor is L-ascorbate.

In Variovorax paradoxus (strain S110), this protein is PKHD-type hydroxylase Vapar_1809.